The chain runs to 531 residues: Importin subunit alpha-3 (531 aa).

The IBB domain maps to M1–S58. 8 ARM repeats span residues I111–N153, T154–L198, V199–P236, P237–Q281, A282–Q321, T322–Q364, I365–H405, and D406–E447. The tract at residues D500–P524 is disordered. Polar residues predominate over residues A511 to P524.

Belongs to the importin alpha family. Forms a complex with importin subunit beta-1. Interacts with PRL1. Interacts with A.tumefaciens VirD2 and VirE2.

The protein resides in the nucleus. Its function is as follows. Binds to conventional NLS motifs and mediates nuclear protein import across the nuclear envelope. Acts as a cellular receptor for the nuclear import of the virD2 protein of Agrobacterium, but is not essential for Agrobacterium-mediated root transformation. May be involved in the regulation of pathogen-induced salicylic acid accumulation. In Arabidopsis thaliana (Mouse-ear cress), this protein is Importin subunit alpha-3.